The primary structure comprises 224 residues: Dehydration-responsive element-binding protein 1G (224 aa).

Residues 1 to 16 are compositionally biased toward polar residues; that stretch reads MDVSAALSSDYSSGTP. The interval 1 to 46 is disordered; the sequence is MDVSAALSSDYSSGTPSPVAADADDGSSAYMTVSSAPPKRRAGRTK. The AP2/ERF DNA-binding region spans 54 to 111; the sequence is VFKGVRRRNPGRWVCEVREPHGKQRIWLGTFETAEMAARAHDVAALALRGRAACLNFA. 2 disordered regions span residues 139 to 161 and 200 to 224; these read AFRP…SGAT and PPMA…LWSY.

Belongs to the AP2/ERF transcription factor family. ERF subfamily.

It is found in the nucleus. Transcriptional activator that binds specifically to the DNA sequence 5'-[AG]CCGAC-3'. Binding to the C-repeat/DRE element mediates high salinity- and dehydration-inducible transcription. In Oryza sativa subsp. japonica (Rice), this protein is Dehydration-responsive element-binding protein 1G (DREB1G).